The sequence spans 479 residues: Glutamyl-tRNA reductase (479 aa).

Substrate contacts are provided by residues 49-52 (TCNR), serine 109, 114-116 (EQQ), and glutamine 120. The active-site Nucleophile is the cysteine 50. 191 to 196 (GAGSMG) lines the NADP(+) pocket.

This sequence belongs to the glutamyl-tRNA reductase family. In terms of assembly, homodimer.

The catalysed reaction is (S)-4-amino-5-oxopentanoate + tRNA(Glu) + NADP(+) = L-glutamyl-tRNA(Glu) + NADPH + H(+). The protein operates within porphyrin-containing compound metabolism; protoporphyrin-IX biosynthesis; 5-aminolevulinate from L-glutamyl-tRNA(Glu): step 1/2. Catalyzes the NADPH-dependent reduction of glutamyl-tRNA(Glu) to glutamate 1-semialdehyde (GSA). This is Glutamyl-tRNA reductase from Rhodococcus jostii (strain RHA1).